Reading from the N-terminus, the 199-residue chain is Probable GTP-binding protein EngB (199 aa).

The EngB-type G domain occupies 28-199 (DLPEIALAGR…DSWDAILEQV (172 aa)). GTP is bound by residues 36–43 (GRSNVGKS), 63–67 (GKTQL), 81–84 (DVPG), 148–151 (TKAD), and 180–182 (FSS). 2 residues coordinate Mg(2+): S43 and T65.

The protein belongs to the TRAFAC class TrmE-Era-EngA-EngB-Septin-like GTPase superfamily. EngB GTPase family. It depends on Mg(2+) as a cofactor.

Necessary for normal cell division and for the maintenance of normal septation. The protein is Probable GTP-binding protein EngB of Streptococcus pyogenes serotype M49 (strain NZ131).